Here is a 267-residue protein sequence, read N- to C-terminus: Serine/threonine-protein kinase 1 (267 aa).

Residues 18-266 (IQNNVRLVDG…YETVIKHSFL (249 aa)) enclose the Protein kinase domain. ATP is bound by residues 24-32 (LVDGKFGKM) and lysine 47. The Proton acceptor role is filled by aspartate 134.

This sequence belongs to the protein kinase superfamily. Ser/Thr protein kinase family.

It catalyses the reaction L-seryl-[protein] + ATP = O-phospho-L-seryl-[protein] + ADP + H(+). The enzyme catalyses L-threonyl-[protein] + ATP = O-phospho-L-threonyl-[protein] + ADP + H(+). The chain is Serine/threonine-protein kinase 1 (PK1) from Heliothis zea nuclear polyhedrosis virus (HzSNPV).